Consider the following 309-residue polypeptide: NAD kinase (309 aa).

Residue aspartate 89 is the Proton acceptor of the active site. NAD(+)-binding positions include 89 to 90 (DG), 163 to 164 (NE), histidine 174, arginine 191, aspartate 193, and 204 to 209 (TAYALS).

It belongs to the NAD kinase family. A divalent metal cation serves as cofactor.

The protein localises to the cytoplasm. It catalyses the reaction NAD(+) + ATP = ADP + NADP(+) + H(+). Involved in the regulation of the intracellular balance of NAD and NADP, and is a key enzyme in the biosynthesis of NADP. Catalyzes specifically the phosphorylation on 2'-hydroxyl of the adenosine moiety of NAD to yield NADP. In Shewanella sp. (strain W3-18-1), this protein is NAD kinase.